Here is a 178-residue protein sequence, read N- to C-terminus: Ribonuclease M5 (178 aa).

The Toprim domain maps to 4–100; it reads NEFIVVEGRD…KIGVEHADLI (97 aa). Mg(2+) is bound by residues Glu-10, Asp-56, and Asp-58.

This sequence belongs to the ribonuclease M5 family. The cofactor is Mg(2+).

The protein resides in the cytoplasm. The enzyme catalyses Endonucleolytic cleavage of RNA, removing 21 and 42 nucleotides, respectively, from the 5'- and 3'-termini of a 5S-rRNA precursor.. In terms of biological role, required for correct processing of both the 5' and 3' ends of 5S rRNA precursor. Cleaves both sides of a double-stranded region yielding mature 5S rRNA in one step. The polypeptide is Ribonuclease M5 (Staphylococcus aureus (strain NCTC 8325 / PS 47)).